The primary structure comprises 2145 residues: Adenylate cyclase (2145 aa).

4 disordered regions span residues 1 to 115 (MPRN…RMSD), 127 to 236 (DPAG…SGAR), 266 to 307 (GKEH…PVPK), and 329 to 547 (VRDI…GPTD). Composition is skewed to low complexity over residues 7 to 23 (SSRF…SARS), 35 to 68 (PSAS…APSR), and 89 to 107 (SPTS…SSNS). Composition is skewed to polar residues over residues 134 to 148 (SRTQ…SLSQ) and 159 to 205 (PASS…TESP). Residues 217-234 (SIASITTTASSQGSRASG) are compositionally biased toward low complexity. Residues 269-281 (HRSHSYSHARPHR) show a composition bias toward basic residues. Residues 343 to 357 (NDSSQQNNPPKTSGS) are compositionally biased toward polar residues. A compositionally biased stretch (basic and acidic residues) spans 377–403 (KSNEDPRSLRPTVSREDSTISVPKDRN). Positions 404–441 (GSSTMYGTRSRAQSPAPSTTGSYWGHKSGSTDGQTSPG) are enriched in polar residues. Basic and acidic residues-rich tracts occupy residues 454-466 (RLKE…DLKK) and 495-511 (ADGK…RPDL). Positions 637-727 (HNYCIRVFRA…IEDIGREDNS (91 aa)) constitute a Ras-associating domain. 15 LRR repeats span residues 779-800 (EIIS…FISV), 803-824 (NLRD…FGYA), 826-847 (RLTM…ALHN), 850-871 (GLLK…FEAF), 873-894 (VLRT…LAKL), 896-917 (NLVD…VGQM), 919-941 (SLER…FKNL), 943-964 (SLRE…SQLP), 965-986 (KLEI…FERV), 987-1006 (RSIK…APVP), 1007-1028 (TLKA…FHNM), 1030-1051 (NLER…IGNL), 1053-1074 (RLEY…IGCL), 1076-1097 (ELKR…LWWA), and 1099-1120 (KLDY…ASRA). A disordered region spans residues 1114–1226 (PKPASRAPHP…SSRKDSSHTQ (113 aa)). 2 stretches are compositionally biased toward low complexity: residues 1160-1179 (RPSQ…VPGG) and 1201-1217 (SRST…PTAS). LRR repeat units lie at residues 1235–1255 (SLRY…DQLC), 1259–1280 (NLRV…SIKS), 1283–1304 (QLVE…DLEE), 1307–1328 (MLQT…ISRA), 1330–1352 (KLTV…PYDW), and 1359–1380 (NLRY…SVPT). The PPM-type phosphatase domain maps to 1432–1709 (PYGMADTLGS…NKMTVQMLGV (278 aa)). A disordered region spans residues 1718 to 1760 (RSRQHKGQSMPVYASLQDDGGSSTGMRRARKARDGPLDSTLGR). Residues 1773–1910 (AIVFTDIKNS…PMVNKASRIS (138 aa)) form the Guanylate cyclase domain. Mg(2+)-binding residues include aspartate 1778 and aspartate 1821.

Belongs to the adenylyl cyclase class-3 family. Mg(2+) is required as a cofactor.

It catalyses the reaction ATP = 3',5'-cyclic AMP + diphosphate. Functionally, plays essential roles in regulation of cellular metabolism by catalyzing the synthesis of a second messenger, cAMP. The polypeptide is Adenylate cyclase (Podospora anserina (Pleurage anserina)).